A 474-amino-acid chain; its full sequence is Bifunctional protein HldE (474 aa).

The segment at 1-318 (MKLSMPRFDQ…RAVQREQGSE (318 aa)) is ribokinase. Residue 194 to 197 (NLSE) participates in ATP binding. Asp-263 is a catalytic residue. Positions 343 to 474 (FTNGCFDILH…AIVEKIRQKG (132 aa)) are cytidylyltransferase.

The protein in the N-terminal section; belongs to the carbohydrate kinase PfkB family. In the C-terminal section; belongs to the cytidylyltransferase family. Homodimer.

The enzyme catalyses D-glycero-beta-D-manno-heptose 7-phosphate + ATP = D-glycero-beta-D-manno-heptose 1,7-bisphosphate + ADP + H(+). It catalyses the reaction D-glycero-beta-D-manno-heptose 1-phosphate + ATP + H(+) = ADP-D-glycero-beta-D-manno-heptose + diphosphate. The protein operates within nucleotide-sugar biosynthesis; ADP-L-glycero-beta-D-manno-heptose biosynthesis; ADP-L-glycero-beta-D-manno-heptose from D-glycero-beta-D-manno-heptose 7-phosphate: step 1/4. Its pathway is nucleotide-sugar biosynthesis; ADP-L-glycero-beta-D-manno-heptose biosynthesis; ADP-L-glycero-beta-D-manno-heptose from D-glycero-beta-D-manno-heptose 7-phosphate: step 3/4. Catalyzes the phosphorylation of D-glycero-D-manno-heptose 7-phosphate at the C-1 position to selectively form D-glycero-beta-D-manno-heptose-1,7-bisphosphate. Its function is as follows. Catalyzes the ADP transfer from ATP to D-glycero-beta-D-manno-heptose 1-phosphate, yielding ADP-D-glycero-beta-D-manno-heptose. In Pseudomonas paraeruginosa (strain DSM 24068 / PA7) (Pseudomonas aeruginosa (strain PA7)), this protein is Bifunctional protein HldE.